Consider the following 163-residue polypeptide: MEHYRKAGSVELPAPSPMPQLPPDTLEMRVRDGSKIRNLLGLALGRLEGGSARHVVFSGSGRAAGKAVSCAEIVKRRVPGLHQLTKLRFLQTEDSWVPASPDTGLDPLTVRRHVPAVWVLLSRDPLDPNECGYQPPGAPPGLGSMPSSSCGPRSRRRARDTRS.

2 disordered regions span residues methionine 1–proline 22 and asparagine 129–serine 163. The segment covering glycine 143–proline 152 has biased composition (low complexity). The span at arginine 153 to serine 163 shows a compositional bias: basic residues.

The protein belongs to the histone-like Alba family.

It localises to the nucleus. Functionally, may be a component of ribonuclease P or MRP. In Homo sapiens (Human), this protein is Ribonuclease P protein subunit p25-like protein (RPP25L).